The following is a 280-amino-acid chain: Fructose-1,6-bisphosphatase class 1 (280 aa).

Mg(2+) contacts are provided by glutamate 64, aspartate 83, leucine 85, and aspartate 86. Residues 86 to 89 (DGSS), tyrosine 189, and lysine 220 each bind substrate. Glutamate 226 contacts Mg(2+).

This sequence belongs to the FBPase class 1 family. In terms of assembly, homotetramer. The cofactor is Mg(2+).

The protein localises to the cytoplasm. The catalysed reaction is beta-D-fructose 1,6-bisphosphate + H2O = beta-D-fructose 6-phosphate + phosphate. Its pathway is carbohydrate biosynthesis; gluconeogenesis. This is Fructose-1,6-bisphosphatase class 1 from Campylobacter jejuni subsp. jejuni serotype O:2 (strain ATCC 700819 / NCTC 11168).